Here is a 507-residue protein sequence, read N- to C-terminus: ATP synthase subunit alpha (507 aa).

168–175 provides a ligand contact to ATP; that stretch reads GDRQTGKT.

It belongs to the ATPase alpha/beta chains family. F-type ATPases have 2 components, CF(1) - the catalytic core - and CF(0) - the membrane proton channel. CF(1) has five subunits: alpha(3), beta(3), gamma(1), delta(1), epsilon(1). CF(0) has three main subunits: a(1), b(2) and c(9-12). The alpha and beta chains form an alternating ring which encloses part of the gamma chain. CF(1) is attached to CF(0) by a central stalk formed by the gamma and epsilon chains, while a peripheral stalk is formed by the delta and b chains.

The protein resides in the cell membrane. The enzyme catalyses ATP + H2O + 4 H(+)(in) = ADP + phosphate + 5 H(+)(out). Produces ATP from ADP in the presence of a proton gradient across the membrane. The alpha chain is a regulatory subunit. This Mesomycoplasma hyopneumoniae (strain 232) (Mycoplasma hyopneumoniae) protein is ATP synthase subunit alpha.